Reading from the N-terminus, the 148-residue chain is Protoporphyrinogen IX oxidase (148 aa).

The next 4 helical transmembrane spans lie at 7 to 27, 59 to 79, 86 to 106, and 128 to 148; these read YFLW…AALF, FIAS…LLIA, GGWL…HFYC, and FNEI…VKPF. Heme is bound at residue His15. Residue Lys92 participates in heme binding.

It belongs to the HemJ family. Homodimer. Heme b serves as cofactor.

The protein localises to the cell membrane. The enzyme catalyses protoporphyrinogen IX + 3 A = protoporphyrin IX + 3 AH2. It functions in the pathway porphyrin-containing compound metabolism; protoporphyrin-IX biosynthesis; protoporphyrin-IX from protoporphyrinogen-IX: step 1/1. In terms of biological role, catalyzes the oxidation of protoporphyrinogen IX to protoporphyrin IX. Is involved in the biosynthesis of tetrapyrrole molecules like heme. Does not use oxygen or artificial electron acceptors such as menadione or benzoquinone. The chain is Protoporphyrinogen IX oxidase from Helicobacter pylori (strain J99 / ATCC 700824) (Campylobacter pylori J99).